Here is a 293-residue protein sequence, read N- to C-terminus: tRNA (guanine-N(7)-)-methyltransferase (293 aa).

Residues 1–31 (MGGDKIKKDKRQKREDYRAAMRKDDISELPR) are compositionally biased toward basic and acidic residues. 2 disordered regions span residues 1–33 (MGGD…PRKK) and 68–97 (IVDE…TPLR). The span at 75-85 (TSPPPPPPVPE) shows a compositional bias: pro residues. S-adenosyl-L-methionine is bound by residues glycine 111, 134–135 (EI), 169–170 (NT), and cysteine 189. Residue aspartate 192 is part of the active site. An S-adenosyl-L-methionine-binding site is contributed by 267 to 269 (TEE).

Belongs to the class I-like SAM-binding methyltransferase superfamily. TrmB family. As to quaternary structure, forms a complex with TRM82.

Its subcellular location is the nucleus. It carries out the reaction guanosine(46) in tRNA + S-adenosyl-L-methionine = N(7)-methylguanosine(46) in tRNA + S-adenosyl-L-homocysteine. It functions in the pathway tRNA modification; N(7)-methylguanine-tRNA biosynthesis. Its function is as follows. Catalyzes the formation of N(7)-methylguanine at position 46 (m7G46) in tRNA. This is tRNA (guanine-N(7)-)-methyltransferase from Chaetomium globosum (strain ATCC 6205 / CBS 148.51 / DSM 1962 / NBRC 6347 / NRRL 1970) (Soil fungus).